A 648-amino-acid chain; its full sequence is Threonine--tRNA ligase (648 aa).

Residues 1 to 61 (MINITFPDGA…TEDGSIEIVT (61 aa)) form the TGS domain. The catalytic stretch occupies residues 242 to 540 (DHRKLGKELD…LIENYKGAFP (299 aa)). Zn(2+) contacts are provided by Cys336, His387, and His517.

Belongs to the class-II aminoacyl-tRNA synthetase family. Homodimer. It depends on Zn(2+) as a cofactor.

The protein resides in the cytoplasm. The enzyme catalyses tRNA(Thr) + L-threonine + ATP = L-threonyl-tRNA(Thr) + AMP + diphosphate + H(+). In terms of biological role, catalyzes the attachment of threonine to tRNA(Thr) in a two-step reaction: L-threonine is first activated by ATP to form Thr-AMP and then transferred to the acceptor end of tRNA(Thr). Also edits incorrectly charged L-seryl-tRNA(Thr). The chain is Threonine--tRNA ligase from Streptococcus thermophilus (strain ATCC BAA-250 / LMG 18311).